The sequence spans 492 residues: GDP-Man:Man(3)GlcNAc(2)-PP-Dol alpha-1,2-mannosyltransferase (492 aa).

The Lumenal segment spans residues 1–19; it reads MAADTGSWCVYAVLRFFYS. A helical transmembrane segment spans residues 20–40; the sequence is LFFPGLMICGVLCVYLVIGLW. The Cytoplasmic portion of the chain corresponds to 41 to 233; the sequence is VIRWHLQRKK…SRNALLSKAK (193 aa). An intramembrane region (helical) is located at residues 234-254; it reads LIYYYLFAFVYGLVGSCSDIV. The Cytoplasmic segment spans residues 255–399; sequence MVNSSWTLNH…IGLHTMWNEH (145 aa). An intramembrane region (helical) is located at residues 400 to 420; sequence FGIGVVECMAAGTVILAHNSG. The Cytoplasmic segment spans residues 421 to 492; the sequence is GPKLDIVIPH…FLCSMEKLLT (72 aa).

This sequence belongs to the glycosyltransferase group 1 family. Glycosyltransferase 4 subfamily.

The protein resides in the endoplasmic reticulum membrane. The enzyme catalyses an alpha-D-Man-(1-&gt;3)-[alpha-D-Man-(1-&gt;6)]-beta-D-Man-(1-&gt;4)-beta-D-GlcNAc-(1-&gt;4)-alpha-D-GlcNAc-diphospho-di-trans,poly-cis-dolichol + 2 GDP-alpha-D-mannose = an alpha-D-Man-(1-&gt;2)-alpha-D-Man-(1-&gt;2)-alpha-D-Man-(1-&gt;3)-[alpha-D-Man-(1-&gt;6)]-beta-D-Man-(1-&gt;4)-beta-D-GlcNAc-(1-&gt;4)-alpha-D-GlcNAc-diphospho-di-trans,poly-cis-dolichol + 2 GDP + 2 H(+). The protein operates within protein modification; protein glycosylation. Functionally, GDP-Man:Man(3)GlcNAc(2)-PP-Dol alpha-1,2-mannosyltransferase that operates in the biosynthetic pathway of dolichol-linked oligosaccharides, the glycan precursors employed in protein asparagine (N)-glycosylation. The assembly of dolichol-linked oligosaccharides begins on the cytosolic side of the endoplasmic reticulum membrane and finishes in its lumen. The sequential addition of sugars to dolichol pyrophosphate produces dolichol-linked oligosaccharides containing fourteen sugars, including two GlcNAcs, nine mannoses and three glucoses. Once assembled, the oligosaccharide is transferred from the lipid to nascent proteins by oligosaccharyltransferases. Catalyzes, on the cytoplasmic face of the endoplasmic reticulum, the addition of the fourth and fifth mannose residues to the dolichol-linked oligosaccharide chain, to produce Man(5)GlcNAc(2)-PP-dolichol core oligosaccharide. Man(5)GlcNAc(2)-PP-dolichol is a substrate for ALG3, the following enzyme in the biosynthetic pathway. The chain is GDP-Man:Man(3)GlcNAc(2)-PP-Dol alpha-1,2-mannosyltransferase from Mus musculus (Mouse).